Reading from the N-terminus, the 364-residue chain is MWVRTTLTIERWTKEKTEPKARSWDEALSDVNRLPSWERGHLLAGVASSTDVSTFSEGGDCKEPDKCCWRHKQCTGHIIYPFASDCVRHSLHLHSVNHCNCNSRLKDSSEDSSSSRGAGPTCSHVIESPCFELTPEEEHVERFRYGWCKSYRPVSVAVIHHPLYHECGADDLNEEEEEEEEESKPPIPTQVGPATASPDLGTSMATGTPDSTAPITIWRSESPTGKGQGSKVIKKVKKKKEKEKDKEEMDEKAKLKKKAKKGQLTKKKSPVKLEPSPPDVSRSLSARQLARMSESSPESREELESEDSYNGRGQGELSSEDIVESSSPRKRENTVQAKKTGAKPSQARKVNKRKSPPGSNPNLS.

The segment covering 172–182 has biased composition (acidic residues); that stretch reads LNEEEEEEEEE. The segment at 172–364 is disordered; the sequence is LNEEEEEEEE…SPPGSNPNLS (193 aa). The span at 203–223 shows a compositional bias: polar residues; the sequence is SMATGTPDSTAPITIWRSESP. The segment covering 232–241 has biased composition (basic residues); it reads VIKKVKKKKE. The span at 242 to 253 shows a compositional bias: basic and acidic residues; sequence KEKDKEEMDEKA. Residues 254–270 are compositionally biased toward basic residues; it reads KLKKKAKKGQLTKKKSP. A phosphoserine mark is found at S276, S308, S318, S319, S355, and S364.

The protein belongs to the PROCA1 family. In terms of tissue distribution, high expressed in testis.

This Homo sapiens (Human) protein is Protein PROCA1 (PROCA1).